We begin with the raw amino-acid sequence, 614 residues long: Acid phosphatase (614 aa).

Positions 1–22 are cleaved as a signal peptide; it reads MKGTAASALLVALSATAAQARP. The Fibronectin type-III domain maps to 80–176; it reads IPKGMHIHYQ…EVLSFKTSRP (97 aa). N-linked (GlcNAc...) asparagine glycosylation is found at asparagine 110, asparagine 161, asparagine 242, asparagine 295, asparagine 333, asparagine 340, asparagine 352, asparagine 408, asparagine 429, asparagine 512, asparagine 523, asparagine 559, and asparagine 578. Positions 606–614 are excised as a propeptide; sequence VAGGKKLHS.

Monomer. Cu cation serves as cofactor. Glycosylated; probably with N-linked high-mannose oligosaccharides.

Its subcellular location is the secreted. It catalyses the reaction a phosphate monoester + H2O = an alcohol + phosphate. Competitively inhibited by phosphomycin and inorganic orthophosphate. The chain is Acid phosphatase (aphA) from Aspergillus ficuum.